Reading from the N-terminus, the 417-residue chain is Serine hydroxymethyltransferase (417 aa).

Residues L121 and 125–127 (GHL) contribute to the (6S)-5,6,7,8-tetrahydrofolate site. The residue at position 229 (K229) is an N6-(pyridoxal phosphate)lysine. 355 to 357 (SPF) serves as a coordination point for (6S)-5,6,7,8-tetrahydrofolate.

The protein belongs to the SHMT family. In terms of assembly, homodimer. Pyridoxal 5'-phosphate is required as a cofactor.

It is found in the cytoplasm. It catalyses the reaction (6R)-5,10-methylene-5,6,7,8-tetrahydrofolate + glycine + H2O = (6S)-5,6,7,8-tetrahydrofolate + L-serine. It functions in the pathway one-carbon metabolism; tetrahydrofolate interconversion. It participates in amino-acid biosynthesis; glycine biosynthesis; glycine from L-serine: step 1/1. Functionally, catalyzes the reversible interconversion of serine and glycine with tetrahydrofolate (THF) serving as the one-carbon carrier. This reaction serves as the major source of one-carbon groups required for the biosynthesis of purines, thymidylate, methionine, and other important biomolecules. Also exhibits THF-independent aldolase activity toward beta-hydroxyamino acids, producing glycine and aldehydes, via a retro-aldol mechanism. The protein is Serine hydroxymethyltransferase of Shewanella baltica (strain OS155 / ATCC BAA-1091).